We begin with the raw amino-acid sequence, 271 residues long: ATP synthase subunit delta (271 aa).

It belongs to the ATPase delta chain family. As to quaternary structure, F-type ATPases have 2 components, F(1) - the catalytic core - and F(0) - the membrane proton channel. F(1) has five subunits: alpha(3), beta(3), gamma(1), delta(1), epsilon(1). F(0) has three main subunits: a(1), b(2) and c(10-14). The alpha and beta chains form an alternating ring which encloses part of the gamma chain. F(1) is attached to F(0) by a central stalk formed by the gamma and epsilon chains, while a peripheral stalk is formed by the delta and b chains.

It is found in the cell membrane. Its function is as follows. F(1)F(0) ATP synthase produces ATP from ADP in the presence of a proton or sodium gradient. F-type ATPases consist of two structural domains, F(1) containing the extramembraneous catalytic core and F(0) containing the membrane proton channel, linked together by a central stalk and a peripheral stalk. During catalysis, ATP synthesis in the catalytic domain of F(1) is coupled via a rotary mechanism of the central stalk subunits to proton translocation. Functionally, this protein is part of the stalk that links CF(0) to CF(1). It either transmits conformational changes from CF(0) to CF(1) or is implicated in proton conduction. This Beutenbergia cavernae (strain ATCC BAA-8 / DSM 12333 / CCUG 43141 / JCM 11478 / NBRC 16432 / NCIMB 13614 / HKI 0122) protein is ATP synthase subunit delta.